A 66-amino-acid chain; its full sequence is Large ribosomal subunit protein bL35 (66 aa).

It belongs to the bacterial ribosomal protein bL35 family.

This chain is Large ribosomal subunit protein bL35, found in Leptospira biflexa serovar Patoc (strain Patoc 1 / Ames).